Consider the following 66-residue polypeptide: Beta-toxin Cb1 (66 aa).

The LCN-type CS-alpha/beta domain maps to 1–66 (KEGYIVNHST…VWPLPKKTCN (66 aa)). Cystine bridges form between Cys12–Cys65, Cys16–Cys41, Cys25–Cys46, and Cys29–Cys48.

This sequence belongs to the long (4 C-C) scorpion toxin superfamily. Sodium channel inhibitor family. Beta subfamily. In terms of tissue distribution, expressed by the venom gland.

It localises to the secreted. With respect to regulation, inhibited by human antibodies scFvs 10FG2 and LR. Beta toxins bind voltage-independently at site-4 of sodium channels (Nav) and reduces peak current and shifts the voltage of activation toward more negative potentials thereby affecting sodium channel activation and promoting spontaneous and repetitive firing. Has an inhibitory effect on voltage-gated sodium channel hNav1.6/SCN8A, affecting both the activation and inactivation processes. This toxin is active against mammals and lethal to mice. This is Beta-toxin Cb1 from Centruroides baergi (Scorpion).